Reading from the N-terminus, the 87-residue chain is Cell division topological specificity factor (87 aa).

Belongs to the MinE family.

Prevents the cell division inhibition by proteins MinC and MinD at internal division sites while permitting inhibition at polar sites. This ensures cell division at the proper site by restricting the formation of a division septum at the midpoint of the long axis of the cell. This is Cell division topological specificity factor from Chelativorans sp. (strain BNC1).